Here is a 203-residue protein sequence, read N- to C-terminus: RNA annealing protein YRA2 (203 aa).

An N-acetylmethionine modification is found at M1. 2 disordered regions span residues 1 to 60 (MDKA…REEP) and 134 to 203 (EIYQ…YMKG). A compositionally biased stretch (polar residues) spans 11-20 (NSHTDSSSNH). The span at 47–60 (SRSKDRLYREREEP) shows a compositional bias: basic and acidic residues. Residues 64-138 (KRIRISKIPL…AKIEVEIYQP (75 aa)) enclose the RRM domain. Composition is skewed to basic residues over residues 139–153 (QRKH…RRKQ) and 163–180 (PGSH…KNKG).

This sequence belongs to the YRA1 family. As to quaternary structure, associates with mRNPs. Interacts with YRA1.

It is found in the nucleus. Involved in export of poly(A) mRNAs from the nucleus. Recruited to the coding sequences as well as poly-A sites of active genes. In Saccharomyces cerevisiae (strain RM11-1a) (Baker's yeast), this protein is RNA annealing protein YRA2 (YRA2).